An 80-amino-acid chain; its full sequence is Protein FAM229B (80 aa).

The segment at 1 to 45 (MPFRFGTQPRRFPVEGGDSSIELESGLSSSASCTGKETSPNRQLR) is disordered. Over residues 15 to 32 (EGGDSSIELESGLSSSAS) the composition is skewed to low complexity. Residues 33–42 (CTGKETSPNR) are compositionally biased toward polar residues.

The protein belongs to the FAM229 family.

In Mus musculus (Mouse), this protein is Protein FAM229B (Fam229b).